The chain runs to 456 residues: Armadillo repeat-containing X-linked protein 1 (456 aa).

At 1 to 6 the chain is on the mitochondrial intermembrane side; the sequence is MGRTRE. 2 mitochondrion outer membrane (MOM)-targeting sequence regions span residues 1 to 6 and 26 to 36; these read MGRTRE and RLTWGKDENEK. A helical; Signal-anchor transmembrane segment spans residues 7–29; it reads AGCVAAGMVIGAGACYCVYRLTW. At 30–456 the chain is on the cytoplasmic side; that stretch reads GKDENEKLWD…VKVLKVLTKL (427 aa). 2 disordered regions span residues 37–106 and 139–186; these read LWDE…SGGG and RTLT…APAT. Positions 38-50 are enriched in acidic residues; the sequence is WDEEEEEEEEEEE. 2 stretches are compositionally biased toward basic and acidic residues: residues 51–62 and 72–81; these read KSCSDKTEKELK and KPQDDSKSKV. The segment covering 162 to 180 has biased composition (basic residues); sequence SRARNRTSGKVKRKNRSKS. ARM repeat units follow at residues 198-238, 240-279, 361-401, and 418-456; these read PYKI…NNAA, SFNQ…NLSV, PAMT…NIND, and SSLF…LTKL.

The protein belongs to the eutherian X-chromosome-specific Armcx family. As to quaternary structure, interacts with MIRO1. In terms of tissue distribution, widely expressed in the adult nervous tissue, especially in the forebrain, including the cerebral cortex, hippocampus and thalamus.

Its subcellular location is the mitochondrion. The protein localises to the mitochondrion outer membrane. Its function is as follows. Regulates mitochondrial transport during axon regeneration. Increases the proportion of motile mitochondria by recruiting stationary mitochondria into the motile pool. Enhances mitochondria movement and neurite growth in both adult axons and embryonic neurons. Promotes neuronal survival and axon regeneration after nerve injury. May link mitochondria to the Trak1-kinesin motor complex via its interaction with Miro1. The chain is Armadillo repeat-containing X-linked protein 1 (Armcx1) from Mus musculus (Mouse).